Consider the following 423-residue polypeptide: Gamma-glutamyl phosphate reductase (423 aa).

The protein belongs to the gamma-glutamyl phosphate reductase family.

The protein localises to the cytoplasm. The catalysed reaction is L-glutamate 5-semialdehyde + phosphate + NADP(+) = L-glutamyl 5-phosphate + NADPH + H(+). Its pathway is amino-acid biosynthesis; L-proline biosynthesis; L-glutamate 5-semialdehyde from L-glutamate: step 2/2. Catalyzes the NADPH-dependent reduction of L-glutamate 5-phosphate into L-glutamate 5-semialdehyde and phosphate. The product spontaneously undergoes cyclization to form 1-pyrroline-5-carboxylate. The polypeptide is Gamma-glutamyl phosphate reductase (Roseiflexus castenholzii (strain DSM 13941 / HLO8)).